Reading from the N-terminus, the 288-residue chain is Diaminopimelate epimerase (288 aa).

Substrate-binding residues include asparagine 13, glutamine 46, and asparagine 66. The Proton donor role is filled by cysteine 75. Substrate contacts are provided by residues 76–77 (GN), asparagine 166, asparagine 199, and 217–218 (ER). The active-site Proton acceptor is the cysteine 226. Residue 227–228 (GT) coordinates substrate.

This sequence belongs to the diaminopimelate epimerase family. As to quaternary structure, homodimer.

Its subcellular location is the cytoplasm. It catalyses the reaction (2S,6S)-2,6-diaminopimelate = meso-2,6-diaminopimelate. Its pathway is amino-acid biosynthesis; L-lysine biosynthesis via DAP pathway; DL-2,6-diaminopimelate from LL-2,6-diaminopimelate: step 1/1. Its function is as follows. Catalyzes the stereoinversion of LL-2,6-diaminopimelate (L,L-DAP) to meso-diaminopimelate (meso-DAP), a precursor of L-lysine and an essential component of the bacterial peptidoglycan. This Cupriavidus necator (strain ATCC 17699 / DSM 428 / KCTC 22496 / NCIMB 10442 / H16 / Stanier 337) (Ralstonia eutropha) protein is Diaminopimelate epimerase.